The sequence spans 235 residues: Large ribosomal subunit protein uL1 (235 aa).

It belongs to the universal ribosomal protein uL1 family. Part of the 50S ribosomal subunit.

Its function is as follows. Binds directly to 23S rRNA. The L1 stalk is quite mobile in the ribosome, and is involved in E site tRNA release. Functionally, protein L1 is also a translational repressor protein, it controls the translation of the L11 operon by binding to its mRNA. The protein is Large ribosomal subunit protein uL1 of Pseudarthrobacter chlorophenolicus (strain ATCC 700700 / DSM 12829 / CIP 107037 / JCM 12360 / KCTC 9906 / NCIMB 13794 / A6) (Arthrobacter chlorophenolicus).